The chain runs to 124 residues: Small ribosomal subunit protein uS12 (124 aa).

D89 bears the 3-methylthioaspartic acid mark. Residues 104–124 (ALGVEDRKRGRSKYGAKRPKA) form a disordered region. Residues 112–124 (RGRSKYGAKRPKA) are compositionally biased toward basic residues.

This sequence belongs to the universal ribosomal protein uS12 family. As to quaternary structure, part of the 30S ribosomal subunit. Contacts proteins S8 and S17. May interact with IF1 in the 30S initiation complex.

Its function is as follows. With S4 and S5 plays an important role in translational accuracy. In terms of biological role, interacts with and stabilizes bases of the 16S rRNA that are involved in tRNA selection in the A site and with the mRNA backbone. Located at the interface of the 30S and 50S subunits, it traverses the body of the 30S subunit contacting proteins on the other side and probably holding the rRNA structure together. The combined cluster of proteins S8, S12 and S17 appears to hold together the shoulder and platform of the 30S subunit. The polypeptide is Small ribosomal subunit protein uS12 (Treponema denticola (strain ATCC 35405 / DSM 14222 / CIP 103919 / JCM 8153 / KCTC 15104)).